Reading from the N-terminus, the 251-residue chain is Glucosamine-6-phosphate deaminase (251 aa).

Asp67 (proton acceptor; for enolization step) is an active-site residue. Asn136 acts as the For ring-opening step in catalysis. Residue His138 is the Proton acceptor; for ring-opening step of the active site. Residue Glu143 is the For ring-opening step of the active site.

The protein belongs to the glucosamine/galactosamine-6-phosphate isomerase family. NagB subfamily.

The catalysed reaction is alpha-D-glucosamine 6-phosphate + H2O = beta-D-fructose 6-phosphate + NH4(+). The protein operates within amino-sugar metabolism; N-acetylneuraminate degradation; D-fructose 6-phosphate from N-acetylneuraminate: step 5/5. In terms of biological role, catalyzes the reversible isomerization-deamination of glucosamine 6-phosphate (GlcN6P) to form fructose 6-phosphate (Fru6P) and ammonium ion. This is Glucosamine-6-phosphate deaminase from Geobacillus sp. (strain WCH70).